A 416-amino-acid chain; its full sequence is Orexin/Hypocretin receptor type 1 (416 aa).

A disordered region spans residues 1–22 (MEPSATPGAQPGVPTSSGEPFH). Residues 1–46 (MEPSATPGAQPGVPTSSGEPFHLPPDYEDEFLRYLWRDYLYPKQYE) are Extracellular-facing. Residues 26–41 (DYEDEFLRYLWRDYLY) form a required for response to orexin-A region. A helical transmembrane segment spans residues 47–67 (WVLIAAYVAVFLIALVGNTLV). The Cytoplasmic portion of the chain corresponds to 68 to 82 (CLAVWRNHHMRTVTN). A helical transmembrane segment spans residues 83-105 (YFIVNLSLADVLVTAICLPASLL). At 106 to 119 (VDITESWLFGHALC) the chain is on the extracellular side. A disulfide bridge connects residues Cys119 and Cys202. Residues 120 to 140 (KVIPYLQAVSVSVAVLTLSFI) traverse the membrane as a helical segment. Residues 141 to 160 (ALDRWYAICHPLLFKSTARR) lie on the Cytoplasmic side of the membrane. A helical membrane pass occupies residues 161–182 (ARGSILGIWAVSLAVMVPQAAV). Over 183 to 213 (MECSSVLPELANRTRLFSVCDERWADELYPK) the chain is Extracellular. An N-linked (GlcNAc...) asparagine glycan is attached at Asn194. A helical transmembrane segment spans residues 214-235 (IYHSCFFFVTYLAPLGLMGMAY). At 236–298 (FQIFRKLWGP…QMRARRKTAK (63 aa)) the chain is on the cytoplasmic side. The helical transmembrane segment at 299-321 (MLMVVLLVFALCYLPISVLNVLK) threads the bilayer. The Extracellular portion of the chain corresponds to 322–336 (RVFGMFRQASDREAV). A helical membrane pass occupies residues 337–360 (YACFTFSHWLVYANSAANPIIYNF). The Cytoplasmic portion of the chain corresponds to 361–416 (LSGKFREQFKAAFSCCLPGLGPSSSARHKSLSLQSRCSVSKVSEHVVLTTVTTVLS).

This sequence belongs to the G-protein coupled receptor 1 family. Highly expressed in the brain in the prefrontal cortex, hippocampus, paraventricular thalamus, ventromedial hypothalamus, arcuate nucleus, dorsal raphe nucleus, and locus coeruleus. Not detected in the spleen, lung, liver, skeletal muscle, kidney and testis. Orexin receptor mRNA expression has also been reported in the adrenal gland, enteric nervous system, and pancreas.

It is found in the cell membrane. Functionally, moderately selective excitatory receptor for orexin-A and, with a lower affinity, for orexin-B neuropeptide. Triggers an increase in cytoplasmic Ca(2+) levels in response to orexin-A binding. The polypeptide is Orexin/Hypocretin receptor type 1 (Rattus norvegicus (Rat)).